Here is a 1027-residue protein sequence, read N- to C-terminus: Protein translocase subunit SecA (1027 aa).

ATP contacts are provided by residues Q143, G161 to T165, and D661. Positions E981–P1027 are disordered. Residues C1011, C1013, C1022, and H1023 each contribute to the Zn(2+) site.

It belongs to the SecA family. Monomer and homodimer. Part of the essential Sec protein translocation apparatus which comprises SecA, SecYEG and auxiliary proteins SecDF. Other proteins may also be involved. It depends on Zn(2+) as a cofactor.

The protein resides in the cell inner membrane. It localises to the cytoplasm. The enzyme catalyses ATP + H2O + cellular proteinSide 1 = ADP + phosphate + cellular proteinSide 2.. Part of the Sec protein translocase complex. Interacts with the SecYEG preprotein conducting channel. Has a central role in coupling the hydrolysis of ATP to the transfer of proteins into and across the cell membrane, serving as an ATP-driven molecular motor driving the stepwise translocation of polypeptide chains across the membrane. This chain is Protein translocase subunit SecA, found in Chlorobium limicola (strain DSM 245 / NBRC 103803 / 6330).